The chain runs to 203 residues: Large ribosomal subunit protein uL13 (203 aa).

Ala2 bears the N-acetylalanine mark. At Arg59 the chain carries Citrulline. Ser77 is subject to Phosphoserine. Position 140 is a citrulline (Arg140). Lys191 is subject to N6-acetyllysine.

The protein belongs to the universal ribosomal protein uL13 family. In terms of assembly, component of the 60S ribosome. Component of the GAIT complex. Interacts with EIF4G1. Post-translationally, phosphorylation at Ser-77 upon interferon-gamma treatment in macrophages involves a DAPK1-DAPK3 kinase cascade and is causing release from the ribosome, association with the GAIT complex and subsequent involvement in transcript-selective translation inhibition. Citrullinated by PADI4.

The protein resides in the cytoplasm. In terms of biological role, associated with ribosomes but is not required for canonical ribosome function and has extra-ribosomal functions. Component of the GAIT (gamma interferon-activated inhibitor of translation) complex which mediates interferon-gamma-induced transcript-selective translation inhibition in inflammation processes. Upon interferon-gamma activation and subsequent phosphorylation dissociates from the ribosome and assembles into the GAIT complex which binds to stem loop-containing GAIT elements in the 3'-UTR of diverse inflammatory mRNAs (such as ceruplasmin) and suppresses their translation. In the GAIT complex interacts with m7G cap-bound eIF4G at or near the eIF3-binding site and blocks the recruitment of the 43S ribosomal complex. Involved in methylation of rRNA. The polypeptide is Large ribosomal subunit protein uL13 (Rpl13a) (Rattus norvegicus (Rat)).